The following is a 434-amino-acid chain: Tryptophan synthase beta chain (434 aa).

An N6-(pyridoxal phosphate)lysine modification is found at lysine 92. Positions 411–434 (VKGGVATSPESFDASGAKGAGSQS) are disordered.

Belongs to the TrpB family. Tetramer of two alpha and two beta chains. Pyridoxal 5'-phosphate serves as cofactor.

The enzyme catalyses (1S,2R)-1-C-(indol-3-yl)glycerol 3-phosphate + L-serine = D-glyceraldehyde 3-phosphate + L-tryptophan + H2O. Its pathway is amino-acid biosynthesis; L-tryptophan biosynthesis; L-tryptophan from chorismate: step 5/5. Its function is as follows. The beta subunit is responsible for the synthesis of L-tryptophan from indole and L-serine. The chain is Tryptophan synthase beta chain from Polaromonas naphthalenivorans (strain CJ2).